A 200-amino-acid polypeptide reads, in one-letter code: Large ribosomal subunit protein uL4 (200 aa).

Residues G38–R73 form a disordered region.

Belongs to the universal ribosomal protein uL4 family. Part of the 50S ribosomal subunit.

Functionally, one of the primary rRNA binding proteins, this protein initially binds near the 5'-end of the 23S rRNA. It is important during the early stages of 50S assembly. It makes multiple contacts with different domains of the 23S rRNA in the assembled 50S subunit and ribosome. Forms part of the polypeptide exit tunnel. This chain is Large ribosomal subunit protein uL4, found in Ectopseudomonas mendocina (strain ymp) (Pseudomonas mendocina).